A 168-amino-acid polypeptide reads, in one-letter code: uncharacterized protein (168 aa).

Residues 5-24 form a helical membrane-spanning segment; the sequence is IAWASACLLLVMLTGFFTIG.

Its subcellular location is the membrane. This is an uncharacterized protein from Bacillus subtilis (strain 168).